The chain runs to 431 residues: Adenylosuccinate synthetase (431 aa).

Residues glycine 12–lysine 18 and glycine 40–threonine 42 contribute to the GTP site. Aspartate 13 functions as the Proton acceptor in the catalytic mechanism. 2 residues coordinate Mg(2+): aspartate 13 and glycine 40. IMP is bound by residues aspartate 13–lysine 16, asparagine 38–histidine 41, threonine 129, arginine 143, glutamine 224, threonine 239, and arginine 303. The active-site Proton donor is the histidine 41. Residue valine 299–arginine 305 coordinates substrate. GTP-binding positions include arginine 305, lysine 331–aspartate 333, and glycine 413–glycine 415.

The protein belongs to the adenylosuccinate synthetase family. Homodimer. Requires Mg(2+) as cofactor.

It is found in the cytoplasm. It catalyses the reaction IMP + L-aspartate + GTP = N(6)-(1,2-dicarboxyethyl)-AMP + GDP + phosphate + 2 H(+). It participates in purine metabolism; AMP biosynthesis via de novo pathway; AMP from IMP: step 1/2. Its function is as follows. Plays an important role in the de novo pathway of purine nucleotide biosynthesis. Catalyzes the first committed step in the biosynthesis of AMP from IMP. This chain is Adenylosuccinate synthetase, found in Mycolicibacterium vanbaalenii (strain DSM 7251 / JCM 13017 / BCRC 16820 / KCTC 9966 / NRRL B-24157 / PYR-1) (Mycobacterium vanbaalenii).